The following is a 588-amino-acid chain: BTB/POZ domain-containing protein At3g26490 (588 aa).

Residues 28 to 99 form the BTB domain; sequence NDLVIQVKST…CYGITITLCA (72 aa). One can recognise an NPH3 domain in the interval 218–507; that stretch reads RWWGEDLAEL…VQILFVEQAR (290 aa). Phosphoserine is present on residues S376 and S378. A Phosphotyrosine modification is found at Y448. A disordered region spans residues 529 to 554; the sequence is FTTRREEGGQEEEERDETKPSGGFLQ.

The protein belongs to the NPH3 family.

Its pathway is protein modification; protein ubiquitination. May act as a substrate-specific adapter of an E3 ubiquitin-protein ligase complex (CUL3-RBX1-BTB) which mediates the ubiquitination and subsequent proteasomal degradation of target proteins. This Arabidopsis thaliana (Mouse-ear cress) protein is BTB/POZ domain-containing protein At3g26490.